Consider the following 156-residue polypeptide: Small ribosomal subunit protein uS7 (156 aa).

It belongs to the universal ribosomal protein uS7 family. As to quaternary structure, part of the 30S ribosomal subunit. Contacts proteins S9 and S11.

One of the primary rRNA binding proteins, it binds directly to 16S rRNA where it nucleates assembly of the head domain of the 30S subunit. Is located at the subunit interface close to the decoding center, probably blocks exit of the E-site tRNA. This is Small ribosomal subunit protein uS7 from Acidithiobacillus ferrooxidans (strain ATCC 53993 / BNL-5-31) (Leptospirillum ferrooxidans (ATCC 53993)).